The chain runs to 62 residues: Omega-conotoxin-like Bu11 (62 aa).

The signal sequence occupies residues 1 to 7 (ACQLITA). A propeptide spanning residues 8-27 (EDSRGTQLHRALRSTSKVSK) is cleaved from the precursor. 3 disulfides stabilise this stretch: Cys-31–Cys-46, Cys-38–Cys-49, and Cys-45–Cys-56.

It belongs to the conotoxin O1 superfamily. In terms of tissue distribution, expressed by the venom duct.

The protein resides in the secreted. In terms of biological role, omega-conotoxins act at presynaptic membranes, they bind and block voltage-gated calcium channels (Cav). This chain is Omega-conotoxin-like Bu11, found in Conus bullatus (Bubble cone).